We begin with the raw amino-acid sequence, 470 residues long: FAD-dependent monooxygenase nvfK (470 aa).

Residues Met1 to Cys23 form the signal peptide. 3 residues coordinate FAD: Glu35, Gly49, and Arg108. The N-linked (GlcNAc...) asparagine glycan is linked to Asn121. The active site involves Tyr216. Residues Asp308 and Ala321 each coordinate FAD. Residues Ile450–Trp470 form a helical membrane-spanning segment.

Belongs to the paxM FAD-dependent monooxygenase family. The cofactor is FAD.

It localises to the membrane. It catalyses the reaction (3R)-3-farnesyl-6-hydroxy-2,3,5-trimethyl-4-oxocyclohexa-1,5-diene-1-carboxylate + 2-oxoglutarate + O2 = (3R)-[(10S)-11-epoxyfarnesyl]-2,3,5-trimethyl-6-oxido-4-oxocyclohexa-1,5-diene-1-carboxylate + succinate + CO2. It functions in the pathway secondary metabolite biosynthesis; terpenoid biosynthesis. FAD-dependent monooxygenase; part of the gene cluster that mediates the biosynthesis of novofumigatonin, a heavily oxygenated meroterpenoid containing a unique orthoester moiety. The first step of the pathway is the synthesis of 3,5-dimethylorsellinic acid (DMOA) by the polyketide synthase nvfA via condensation of one acetyl-CoA starter unit with 3 malonyl-CoA units and 2 methylations. DMOA is then converted to farnesyl-DMOA by the farnesyltransferase nvfB. Epoxydation by FAD-dependent monooxygenase nvfK, followed by a protonation-initiated cyclization catalyzed by the terpene cyclase nvfL leads to the production of asnavolin H. The short chain dehydrogenase nvfC then as a 3-OH dehydrogenase of asnovolin H to yield chemesin D. There are two branches to synthesize asnovolin A from chemesin D. In one branch, chemesin D undergoes Baeyer-Villiger oxidation by nvfH, methylation by nvfJ, and enoyl reduction by the nvfM D enoylreductase that reduces the double bond between C-5'and C-6', to form respectively asnovolin I, asnovolin K, and asnovolin A. In the other branch, the methylation precedes the Baeyer-Villiger oxidation and the enoyl reduction to yield asnovolin A via the asnovolin J intermediate. Asnovolin A is further converted to fumigatonoid A by the Fe(II)/2-oxoglutarate-dependent dioxygenase nvfI that catalyzes an endoperoxidation reaction. The alpha/beta hydrolase nvfD then acts as an epimerase that converts fumigatonoid A to its C-5' epimer, which then undergoes spontaneous or nvfD-catalyzed lactonization. The following step utilizes the ketoreductase nvfG to produce fumigatonoid B. The dioxygenase nvfE further converts fumigatonoid B into fumigatonoid C. Finally the Fe(II)/2-oxoglutarate-dependent dioxygenase nvfF catalyzes two rounds of oxidation to transform fumigatonoid C into the end product, novofumigatonin A. The polypeptide is FAD-dependent monooxygenase nvfK (Aspergillus novofumigatus (strain IBT 16806)).